The chain runs to 460 residues: Exodeoxyribonuclease 7 large subunit (460 aa).

This sequence belongs to the XseA family. As to quaternary structure, heterooligomer composed of large and small subunits.

The protein resides in the cytoplasm. It catalyses the reaction Exonucleolytic cleavage in either 5'- to 3'- or 3'- to 5'-direction to yield nucleoside 5'-phosphates.. In terms of biological role, bidirectionally degrades single-stranded DNA into large acid-insoluble oligonucleotides, which are then degraded further into small acid-soluble oligonucleotides. This Edwardsiella ictaluri (strain 93-146) protein is Exodeoxyribonuclease 7 large subunit.